The sequence spans 242 residues: Myogenic factor 6 (242 aa).

Positions 31–63 are disordered; the sequence is SPLYPGSDGTLSPCQDQMPPEAGSDSSGEEHVL. Residues 93 to 144 enclose the bHLH domain; sequence DRRKAATLRERRRLKKINEAFEALKRRTVANPNQRLPKVEILRSAISYIERL.

As to quaternary structure, efficient DNA binding requires dimerization with another bHLH protein. Interacts with CSRP3. As to expression, skeletal muscle.

It localises to the nucleus. Involved in muscle differentiation (myogenic factor). Induces fibroblasts to differentiate into myoblasts. Probable sequence specific DNA-binding protein. The polypeptide is Myogenic factor 6 (MYF6) (Homo sapiens (Human)).